A 374-amino-acid chain; its full sequence is MVPNLMVIKKHLIGLLLILCPLSLQAQPLFSVVDIQGIRENQLVGYGLVVGLSGTGDKSQTKFTSQSVKNMLSQFGVQLPANVNPKLKNVAAVAVNATLPALASKGQSLDITVSSIGDAKSLRGGTLLLTPLKGADGQIYAIAQGNLVVGGVVAQGNSGSGITINIPTAGLIPNGGIIEREVTSSFLTASTVVLNLKKPGFNTARNIEKEINELFGPDVALAQSHARIHVRAPHDPSQRVTFLAMLENLDIETGPRPARVVFNARTGTIVVGKNVKVHTAAVSHGNLTVSVMESFNVSQPNAFGRGNTAVTPETDVSIDQERGKVFIWPDSDEGTSLQTIVDAVNSLGATPNDLMAILIALDEAGALDGELVVL.

Positions M1 to A26 are cleaved as a signal peptide.

The protein belongs to the FlgI family. The basal body constitutes a major portion of the flagellar organelle and consists of four rings (L,P,S, and M) mounted on a central rod.

The protein localises to the periplasm. The protein resides in the bacterial flagellum basal body. Its function is as follows. Assembles around the rod to form the L-ring and probably protects the motor/basal body from shearing forces during rotation. This chain is Flagellar P-ring protein 1, found in Photobacterium profundum (strain SS9).